Here is a 194-residue protein sequence, read N- to C-terminus: DNA replication complex GINS protein PSF3 (194 aa).

The protein belongs to the GINS3/PSF3 family. In terms of assembly, component of the GINS complex which is a heterotetramer of SLD5, PSF1, PSF2 and PSF3.

Its subcellular location is the nucleus. Functionally, functions as part of the GINS complex which plays an essential role in the initiation of DNA replication by binding to DNA replication origins and facilitating the assembly of the DNA replication machinery. In Saccharomyces cerevisiae (strain ATCC 204508 / S288c) (Baker's yeast), this protein is DNA replication complex GINS protein PSF3.